Here is a 255-residue protein sequence, read N- to C-terminus: 5-oxoprolinase subunit A (255 aa).

This sequence belongs to the LamB/PxpA family. As to quaternary structure, forms a complex composed of PxpA, PxpB and PxpC.

It carries out the reaction 5-oxo-L-proline + ATP + 2 H2O = L-glutamate + ADP + phosphate + H(+). Catalyzes the cleavage of 5-oxoproline to form L-glutamate coupled to the hydrolysis of ATP to ADP and inorganic phosphate. This is 5-oxoprolinase subunit A from Campylobacter jejuni subsp. doylei (strain ATCC BAA-1458 / RM4099 / 269.97).